We begin with the raw amino-acid sequence, 144 residues long: MPPKKKKVTGLIKLQIQAGAANPAPPVGPALGQHGVNIMEFCKAYNAATESQRGWVIPVEITVYEDRSFTFITKTPPAAKMILKAAGVEKGSGEPHKTKVAKITRDQVREIATTKMPDLNANDLDQAEKIIAGTARSMGVTVEG.

It belongs to the universal ribosomal protein uL11 family. In terms of assembly, part of the ribosomal stalk of the 50S ribosomal subunit. Interacts with L10 and the large rRNA to form the base of the stalk. L10 forms an elongated spine to which L12 dimers bind in a sequential fashion forming a multimeric L10(L12)X complex. One or more lysine residues are methylated.

Forms part of the ribosomal stalk which helps the ribosome interact with GTP-bound translation factors. The polypeptide is Large ribosomal subunit protein uL11 (Streptomyces coelicolor (strain ATCC BAA-471 / A3(2) / M145)).